A 334-amino-acid chain; its full sequence is GTP 3',8-cyclase (334 aa).

The Radical SAM core domain occupies 11-236 (GFNRKIDYLR…ESTESSQGPA (226 aa)). Residue Arg-20 coordinates GTP. 2 residues coordinate [4Fe-4S] cluster: Cys-27 and Cys-31. Tyr-33 lines the S-adenosyl-L-methionine pocket. [4Fe-4S] cluster is bound at residue Cys-34. Arg-69 lines the GTP pocket. Gly-73 serves as a coordination point for S-adenosyl-L-methionine. Thr-100 contributes to the GTP binding site. S-adenosyl-L-methionine is bound at residue Ser-124. Residue Lys-161 participates in GTP binding. Met-195 is a binding site for S-adenosyl-L-methionine. Residues Cys-260 and Cys-263 each contribute to the [4Fe-4S] cluster site. Residue 265-267 (RVR) participates in GTP binding. Cys-277 lines the [4Fe-4S] cluster pocket.

Belongs to the radical SAM superfamily. MoaA family. In terms of assembly, monomer and homodimer. [4Fe-4S] cluster is required as a cofactor.

It carries out the reaction GTP + AH2 + S-adenosyl-L-methionine = (8S)-3',8-cyclo-7,8-dihydroguanosine 5'-triphosphate + 5'-deoxyadenosine + L-methionine + A + H(+). It participates in cofactor biosynthesis; molybdopterin biosynthesis. In terms of biological role, catalyzes the cyclization of GTP to (8S)-3',8-cyclo-7,8-dihydroguanosine 5'-triphosphate. In Pseudomonas putida (strain GB-1), this protein is GTP 3',8-cyclase.